Here is a 379-residue protein sequence, read N- to C-terminus: uncharacterized protein (379 aa).

A helical membrane pass occupies residues 7 to 27 (VYIFAGIFLFIALIILIKIFF).

Its subcellular location is the membrane. This is an uncharacterized protein from Caenorhabditis elegans.